The chain runs to 311 residues: Bifunctional protein FolD (311 aa).

Glycine 174 to glycine 176 contributes to the NADP(+) binding site.

It belongs to the tetrahydrofolate dehydrogenase/cyclohydrolase family. As to quaternary structure, homodimer.

It carries out the reaction (6R)-5,10-methylene-5,6,7,8-tetrahydrofolate + NADP(+) = (6R)-5,10-methenyltetrahydrofolate + NADPH. The catalysed reaction is (6R)-5,10-methenyltetrahydrofolate + H2O = (6R)-10-formyltetrahydrofolate + H(+). Its pathway is one-carbon metabolism; tetrahydrofolate interconversion. In terms of biological role, catalyzes the oxidation of 5,10-methylenetetrahydrofolate to 5,10-methenyltetrahydrofolate and then the hydrolysis of 5,10-methenyltetrahydrofolate to 10-formyltetrahydrofolate. This Pyrobaculum islandicum (strain DSM 4184 / JCM 9189 / GEO3) protein is Bifunctional protein FolD.